The primary structure comprises 137 residues: MMQPKKTKFRKAHKGRIHGVASSGATLAFGQFGLKAMEPERVTARQIEAARRALTRHMKRAGRVWIRIFPDVPVSKKPAEVRMGSGKGAPELWVARVKPGRVMFEIDGVNQQIAREALTLAAAKLPIKTRFVARIAE.

Belongs to the universal ribosomal protein uL16 family. As to quaternary structure, part of the 50S ribosomal subunit.

Its function is as follows. Binds 23S rRNA and is also seen to make contacts with the A and possibly P site tRNAs. The chain is Large ribosomal subunit protein uL16 from Rhodopseudomonas palustris (strain BisB5).